Here is a 230-residue protein sequence, read N- to C-terminus: Small ribosomal subunit protein uS3 (230 aa).

The KH type-2 domain maps to 39-107 (VRNYLRQKLA…PVHVNIEEIR (69 aa)). The disordered stretch occupies residues 210–230 (SSKPEHESKQRKAGRRNAAAN).

It belongs to the universal ribosomal protein uS3 family. As to quaternary structure, part of the 30S ribosomal subunit. Forms a tight complex with proteins S10 and S14.

Functionally, binds the lower part of the 30S subunit head. Binds mRNA in the 70S ribosome, positioning it for translation. The polypeptide is Small ribosomal subunit protein uS3 (Neisseria meningitidis serogroup C (strain 053442)).